The sequence spans 229 residues: Nectarin-1 (229 aa).

Residues 1 to 32 (MAAFGIKSKIFQIMEMTILFLFAISIDRYCFA) form the signal peptide. A disulfide bridge connects residues C42 and C57. N-linked (GlcNAc...) asparagine glycosylation is present at N60. A Cupin type-1 domain is found at 69–217 (FAISKPGATN…TFQINIEDVQ (149 aa)). 4 residues coordinate Mn(2+): H117, H119, E124, and H163.

This sequence belongs to the germin family. As to quaternary structure, monomer. In the absence of manganese, it forms tetrameric and pentameric forms which show superoxide dismutase activity. Mn(2+) serves as cofactor. In terms of processing, glycosylated.

The protein localises to the secreted. It localises to the extracellular space. Its subcellular location is the apoplast. The enzyme catalyses 2 superoxide + 2 H(+) = H2O2 + O2. Its function is as follows. May interact with bacterial adhesins thereby protecting the reproductive tissues from microbial attack. Has no oxalate oxidase activity. The protein is Nectarin-1 (NEC1) of Nicotiana plumbaginifolia (Leadwort-leaved tobacco).